The following is a 279-amino-acid chain: Phage-like element PBSX protein XepA (279 aa).

It to B.subtilis YqxG/YqdC.

In terms of biological role, not known; does not seem to be involved in host cell lysis. This Bacillus subtilis (strain 168) protein is Phage-like element PBSX protein XepA (xepA).